Consider the following 63-residue polypeptide: Prokaryotic ubiquitin-like protein Pup (63 aa).

The disordered stretch occupies residues 1–28 (MPQEFEQIRSADQPLDSEESAPVAGART). Residues 19 to 57 (ESAPVAGARTDDTVDALDAVLDDIESVLETNAEEYVGSF) form an ARC ATPase binding region. E63 is covalently cross-linked (Isoglutamyl lysine isopeptide (Glu-Lys) (interchain with K-? in acceptor proteins)).

The protein belongs to the prokaryotic ubiquitin-like protein family. As to quaternary structure, strongly interacts with the proteasome-associated ATPase ARC through a hydrophobic interface; the interacting region of Pup lies in its C-terminal half. There is one Pup binding site per ARC hexamer ring.

The protein operates within protein degradation; proteasomal Pup-dependent pathway. Protein modifier that is covalently attached to lysine residues of substrate proteins, thereby targeting them for proteasomal degradation. The tagging system is termed pupylation. This is Prokaryotic ubiquitin-like protein Pup from Bifidobacterium dentium (strain ATCC 27534 / DSM 20436 / JCM 1195 / Bd1).